The following is a 225-amino-acid chain: Two-component response regulator ARR8 (225 aa).

One can recognise a Response regulatory domain in the interval 10–145 (HVLAVDDSLF…DLTKLKPHMM (136 aa)). At Asp78 the chain carries 4-aspartylphosphate.

Belongs to the ARR family. Type-A subfamily. In terms of processing, two-component system major event consists of a His-to-Asp phosphorelay between a sensor histidine kinase (HK) and a response regulator (RR). In plants, the His-to-Asp phosphorelay involves an additional intermediate named Histidine-containing phosphotransfer protein (HPt). This multistep phosphorelay consists of a His-Asp-His-Asp sequential transfer of a phosphate group between first a His and an Asp of the HK protein, followed by the transfer to a conserved His of the HPt protein and finally the transfer to an Asp in the receiver domain of the RR protein. Predominantly expressed in roots.

Its subcellular location is the nucleus. In terms of biological role, functions as a response regulator involved in His-to-Asp phosphorelay signal transduction system. Phosphorylation of the Asp residue in the receiver domain activates the ability of the protein to promote the transcription of target genes. Type-A response regulators seem to act as negative regulators of the cytokinin signaling. The chain is Two-component response regulator ARR8 (ARR8) from Arabidopsis thaliana (Mouse-ear cress).